Here is a 72-residue protein sequence, read N- to C-terminus: Hypertrehalosaemic prohormone (72 aa).

A signal peptide spans 1–21 (MNHLVKVLIVVVAIALVLCEA). Gln22 bears the Pyrrolidone carboxylic acid mark. A Threonine amide modification is found at Thr31.

The protein belongs to the AKH/HRTH/RPCH family. As to expression, expressed in corpora cardiaca.

The protein resides in the secreted. Hypertrehalosaemic factors are neuropeptides that elevate the level of trehalose in the hemolymph (trehalose is the major carbohydrate in the hemolymph of insects). This is Hypertrehalosaemic prohormone from Blaberus discoidalis (Tropical cockroach).